A 437-amino-acid polypeptide reads, in one-letter code: Exosome complex component RRP45 (437 aa).

At S65 the chain carries Phosphoserine. K297 carries the N6-acetyllysine; alternate modification. A Glycyl lysine isopeptide (Lys-Gly) (interchain with G-Cter in SUMO1); alternate cross-link involves residue K297. Residue K297 forms a Glycyl lysine isopeptide (Lys-Gly) (interchain with G-Cter in SUMO2); alternate linkage. 2 positions are modified to phosphoserine: S306 and S346. Positions 339 to 437 are disordered; that stretch reads IGEGIENSWG…KRRKKKRTAN (99 aa). A compositionally biased stretch (acidic residues) spans 349-363; that stretch reads DLEDSEKEEEEEGGI. A phosphoserine mark is found at S392, S394, and S407. The segment covering 413–425 has biased composition (polar residues); sequence AQTSANQKAPSKS. The segment covering 426-437 has biased composition (basic residues); that stretch reads QGKRRKKKRTAN.

The protein belongs to the RNase PH family. Component of the RNA exosome core complex (Exo-9), composed of EXOSC1, EXOSC2, EXOSC3, EXOSC4, EXOSC5, EXOSC6, EXOSC7, EXOSC8 and EXOSC9; within the complex interacts with EXOSC3, EXOSC4, EXOSC5 and DIS3. The catalytically inactive RNA exosome core complex (Exo-9) associates with the catalytic subunit EXOSC10/RRP6. Exo-9 may associate with DIS3 to form the nucleolar exosome complex, or DIS3L to form the cytoplasmic exosome complex. Exo-9 is formed by a hexameric base ring consisting of the heterodimers EXOSC4-EXOSC9, EXOSC5-EXOSC8 and EXOSC6-EXOSC7, and a cap ring consisting of EXOSC1, EXOSC2 and EXOSC3. The RNA exosome complex associates with cofactors C1D/RRP47, MPHOSPH6/MPP6 and MTREX/MTR4. Interacts (via C-terminus region) with SETX (via N-terminus domain); the interaction enhances SETX sumoylation. Interacts with DIS3; the interaction is direct.

The protein resides in the cytoplasm. The protein localises to the nucleus. It is found in the nucleolus. It localises to the nucleoplasm. Functionally, non-catalytic component of the RNA exosome complex which has 3'-&gt;5' exoribonuclease activity and participates in a multitude of cellular RNA processing and degradation events. In the nucleus, the RNA exosome complex is involved in proper maturation of stable RNA species such as rRNA, snRNA and snoRNA, in the elimination of RNA processing by-products and non-coding 'pervasive' transcripts, such as antisense RNA species and promoter-upstream transcripts (PROMPTs), and of mRNAs with processing defects, thereby limiting or excluding their export to the cytoplasm. The RNA exosome may be involved in Ig class switch recombination (CSR) and/or Ig variable region somatic hypermutation (SHM) by targeting AICDA deamination activity to transcribed dsDNA substrates. In the cytoplasm, the RNA exosome complex is involved in general mRNA turnover and specifically degrades inherently unstable mRNAs containing AU-rich elements (AREs) within their 3' untranslated regions, and in RNA surveillance pathways, preventing translation of aberrant mRNAs. It seems to be involved in degradation of histone mRNA. The catalytic inactive RNA exosome core complex of 9 subunits (Exo-9) is proposed to play a pivotal role in the binding and presentation of RNA for ribonucleolysis, and to serve as a scaffold for the association with catalytic subunits and accessory proteins or complexes. EXOSC9 binds to ARE-containing RNAs. The protein is Exosome complex component RRP45 (Exosc9) of Rattus norvegicus (Rat).